Reading from the N-terminus, the 117-residue chain is Minor capsid protein VP2 (117 aa).

The protein belongs to the lagovirus VP2 protein family. In terms of assembly, homooligomer. The portal-like structure consists in 12 copies of VP2. Interacts with capsid protein VP1.

Its subcellular location is the virion. It is found in the host cytoplasm. Minor structural protein that forms a portal-like structure at a unique three-fold axis of symmetry, following binding to the host receptor. The channel formed by VP2 may allow the delivery of the viral genome through the host endosomal membrane. The sequence is that of Minor capsid protein VP2 from Rabbit hemorrhagic disease virus (strain AST89) (Ra/LV/RHDV/AST89/1989/SP).